Consider the following 121-residue polypeptide: Flagellar protein FliT (121 aa).

Residues 1-50 (MNNAPHLYFAWQQLVEKSQLMLRLATEEQWDELIASEMAYVNAVQEIAHL) are required for homodimerization. The tract at residues 60-98 (MQEQLRPMLHLILDNESKVKQLLQIRMDELAKLVGQSSV) is fliD binding.

Belongs to the FliT family. As to quaternary structure, homodimer. Interacts with FliD and FlhC.

It localises to the cytoplasm. The protein resides in the cytosol. Dual-function protein that regulates the transcription of class 2 flagellar operons and that also acts as an export chaperone for the filament-capping protein FliD. As a transcriptional regulator, acts as an anti-FlhDC factor; it directly binds FlhC, thus inhibiting the binding of the FlhC/FlhD complex to class 2 promoters, resulting in decreased expression of class 2 flagellar operons. As a chaperone, effects FliD transition to the membrane by preventing its premature polymerization, and by directing it to the export apparatus. The chain is Flagellar protein FliT from Escherichia coli O17:K52:H18 (strain UMN026 / ExPEC).